Reading from the N-terminus, the 511-residue chain is Cytochrome P450 4A7 (511 aa).

Positions 1-4 (MSVS) are excised as a propeptide. Residues glutamate 322 and cysteine 458 each coordinate heme.

The protein belongs to the cytochrome P450 family. Heme serves as cofactor. In terms of tissue distribution, liver, kidney, small intestine.

It localises to the endoplasmic reticulum membrane. Its subcellular location is the microsome membrane. It catalyses the reaction an omega-methyl-long-chain fatty acid + reduced [NADPH--hemoprotein reductase] + O2 = an omega-hydroxy-long-chain fatty acid + oxidized [NADPH--hemoprotein reductase] + H2O + H(+). Its function is as follows. Cytochromes P450 are a group of heme-thiolate monooxygenases. In liver microsomes, this enzyme is involved in an NADPH-dependent electron transport pathway. It oxidizes a variety of structurally unrelated compounds, including steroids, fatty acids, and xenobiotics. In terms of biological role, the kidney P-450 system is rather specialized for the omega-hydroxylation of fatty acids. Both P450-KA1 and P450-KA2 catalyze the omega- and (omega-1)-hydroxylation of various fatty acids with no drug-metabolizing activity, and hydroxylate prostaglandin A1 and A2 solely at the omega-position. The chain is Cytochrome P450 4A7 (CYP4A7) from Oryctolagus cuniculus (Rabbit).